A 386-amino-acid polypeptide reads, in one-letter code: Putative 8-amino-7-oxononanoate synthase (386 aa).

Arg22 lines the substrate pocket. Residue 109-110 participates in pyridoxal 5'-phosphate binding; it reads GY. His134 contacts substrate. Residues Ser182, 207-210, and 238-241 each bind pyridoxal 5'-phosphate; these read DEAH and TLSK. Residue Lys241 is modified to N6-(pyridoxal phosphate)lysine. Thr356 lines the substrate pocket.

This sequence belongs to the class-II pyridoxal-phosphate-dependent aminotransferase family. BioF subfamily. Homodimer. Requires pyridoxal 5'-phosphate as cofactor.

The enzyme catalyses 6-carboxyhexanoyl-[ACP] + L-alanine + H(+) = (8S)-8-amino-7-oxononanoate + holo-[ACP] + CO2. The protein operates within cofactor biosynthesis; biotin biosynthesis. Catalyzes the decarboxylative condensation of pimeloyl-[acyl-carrier protein] and L-alanine to produce 8-amino-7-oxononanoate (AON), [acyl-carrier protein], and carbon dioxide. In Nostoc sp. (strain PCC 7120 / SAG 25.82 / UTEX 2576), this protein is Putative 8-amino-7-oxononanoate synthase (bioF).